Here is a 599-residue protein sequence, read N- to C-terminus: Elongation factor 4 (599 aa).

A tr-type G domain is found at 4–186; sequence DNIRNFSIIA…EIVNKIPPPR (183 aa). Residues 16–21 and 133–136 contribute to the GTP site; these read DHGKST and NKID.

This sequence belongs to the TRAFAC class translation factor GTPase superfamily. Classic translation factor GTPase family. LepA subfamily.

The protein localises to the cell inner membrane. It carries out the reaction GTP + H2O = GDP + phosphate + H(+). In terms of biological role, required for accurate and efficient protein synthesis under certain stress conditions. May act as a fidelity factor of the translation reaction, by catalyzing a one-codon backward translocation of tRNAs on improperly translocated ribosomes. Back-translocation proceeds from a post-translocation (POST) complex to a pre-translocation (PRE) complex, thus giving elongation factor G a second chance to translocate the tRNAs correctly. Binds to ribosomes in a GTP-dependent manner. This chain is Elongation factor 4, found in Geotalea daltonii (strain DSM 22248 / JCM 15807 / FRC-32) (Geobacter daltonii).